Reading from the N-terminus, the 259-residue chain is DNA-directed RNA polymerase 30 kDa polypeptide (259 aa).

A TFIIS-type zinc finger spans residues 155-195 (YNTPCPNCKSRNTTPMMIQTRAADEPPLVRHACRDCKQHFK). Residues Cys-159, Cys-162, Cys-187, and Cys-190 each coordinate Zn(2+). The disordered stretch occupies residues 220 to 259 (EILPDNNPSPPESPEPASPIDDGLIRATFDRNDEPPEDDE). The segment covering 226-236 (NPSPPESPEPA) has biased composition (pro residues).

It belongs to the poxviridae DNA-directed RNA polymerase 30 kDa subunit family. As to quaternary structure, the DNA-dependent RNA polymerase (vRNAP) consists of eight subunits encoded by early viral genes and termed according to their apparent molecular masses Rpo147, Rpo132, Rpo35, Rpo30, Rpo22, Rpo19, Rpo18, and Rpo7. The same holoenzyme, with the addition of the transcription-specificity factor RAP94, is used for early gene expression.

The protein resides in the virion. It localises to the host cytoplasm. The enzyme catalyses RNA(n) + a ribonucleoside 5'-triphosphate = RNA(n+1) + diphosphate. Its function is as follows. Part of the DNA-dependent RNA polymerase which catalyzes the transcription of viral DNA into RNA using the four ribonucleoside triphosphates as substrates. Responsible for the transcription of early, intermediate and late genes. DNA-dependent RNA polymerase associates with the early transcription factor (ETF), itself composed of OPG118 and OPG134, thereby allowing the early genes transcription. Late transcription, and probably also intermediate transcription, require newly synthesized RNA polymerase. The polypeptide is DNA-directed RNA polymerase 30 kDa polypeptide (OPG066) (Bos taurus (Bovine)).